Here is a 333-residue protein sequence, read N- to C-terminus: Ketol-acid reductoisomerase (NADP(+)) (333 aa).

One can recognise a KARI N-terminal Rossmann domain in the interval Met-1–Thr-179. NADP(+)-binding positions include Tyr-22 to Gln-25, Lys-45, Ser-48, Ser-50, and Asp-80 to Gln-83. The active site involves His-105. Gly-131 provides a ligand contact to NADP(+). The 146-residue stretch at Thr-180 to Val-325 folds into the KARI C-terminal knotted domain. Residues Asp-188, Glu-192, Glu-224, and Glu-228 each coordinate Mg(2+). Ser-249 contributes to the substrate binding site.

The protein belongs to the ketol-acid reductoisomerase family. Mg(2+) is required as a cofactor.

It carries out the reaction (2R)-2,3-dihydroxy-3-methylbutanoate + NADP(+) = (2S)-2-acetolactate + NADPH + H(+). The enzyme catalyses (2R,3R)-2,3-dihydroxy-3-methylpentanoate + NADP(+) = (S)-2-ethyl-2-hydroxy-3-oxobutanoate + NADPH + H(+). It participates in amino-acid biosynthesis; L-isoleucine biosynthesis; L-isoleucine from 2-oxobutanoate: step 2/4. Its pathway is amino-acid biosynthesis; L-valine biosynthesis; L-valine from pyruvate: step 2/4. In terms of biological role, involved in the biosynthesis of branched-chain amino acids (BCAA). Catalyzes an alkyl-migration followed by a ketol-acid reduction of (S)-2-acetolactate (S2AL) to yield (R)-2,3-dihydroxy-isovalerate. In the isomerase reaction, S2AL is rearranged via a Mg-dependent methyl migration to produce 3-hydroxy-3-methyl-2-ketobutyrate (HMKB). In the reductase reaction, this 2-ketoacid undergoes a metal-dependent reduction by NADPH to yield (R)-2,3-dihydroxy-isovalerate. This chain is Ketol-acid reductoisomerase (NADP(+)), found in Mycobacterium ulcerans (strain Agy99).